The sequence spans 865 residues: TATA box-binding protein-associated factor RNA polymerase I subunit B (865 aa).

Residues 1–33 (MHSAKNEKCNACGGYRFSVNDGFKYCDRCGALF) form an RRN7-type zinc finger. The Zn(2+) site is built by Cys9, Cys12, Cys26, and Cys29. The B-reader stretch occupies residues 35–99 (NFEELEEEEG…DFLQQQAIKG (65 aa)). A B-linker region spans residues 100–111 (EELELPHDATPD). An N-terminal cyclin fold region spans residues 112–348 (YLYRLALRLF…SQPERMKQGE (237 aa)). The tract at residues 233–261 (DEDGDQDAQGGQQLDDLTLETTQNPDESI) is disordered. Residues 239 to 248 (DAQGGQQLDD) are compositionally biased toward low complexity. A compositionally biased stretch (polar residues) spans 252–261 (ETTQNPDESI). The tract at residues 349–496 (VVKPTIVDYA…LLTLRLTFQL (148 aa)) is C-terminal cyclin fold.

It belongs to the RRN7/TAF1B family.

Its subcellular location is the nucleus. The protein localises to the nucleolus. In terms of biological role, component of RNA polymerase I core factor complex that acts as a GTF2B/TFIIB-like factor and plays a key role in multiple steps during transcription initiation such as pre-initiation complex (PIC) assembly and postpolymerase recruitment events in polymerase I (Pol I) transcription. Binds rDNA promoters and plays a role in Pol I recruitment. This chain is TATA box-binding protein-associated factor RNA polymerase I subunit B, found in Caenorhabditis elegans.